The sequence spans 189 residues: Chitin synthase 2 (189 aa).

It belongs to the chitin synthase family. Class II subfamily.

The protein localises to the cell membrane. The catalysed reaction is [(1-&gt;4)-N-acetyl-beta-D-glucosaminyl](n) + UDP-N-acetyl-alpha-D-glucosamine = [(1-&gt;4)-N-acetyl-beta-D-glucosaminyl](n+1) + UDP + H(+). Polymerizes chitin, a structural polymer of the cell wall and septum, by transferring the sugar moiety of UDP-GlcNAc to the non-reducing end of the growing chitin polymer. The chain is Chitin synthase 2 (CHS2) from Ajellomyces dermatitidis (Blastomyces dermatitidis).